Here is a 149-residue protein sequence, read N- to C-terminus: Arginine repressor (149 aa).

The protein belongs to the ArgR family.

Its subcellular location is the cytoplasm. The protein operates within amino-acid biosynthesis; L-arginine biosynthesis [regulation]. Regulates arginine biosynthesis genes. The protein is Arginine repressor of Chlorobaculum parvum (strain DSM 263 / NCIMB 8327) (Chlorobium vibrioforme subsp. thiosulfatophilum).